Consider the following 450-residue polypeptide: Sorting nexin-4 (450 aa).

Methionine 1 is modified (N-acetylmethionine). The disordered stretch occupies residues 1–46; sequence MEQAPPDPERQLQPAPLEPLGSPDAVLGAAVGKETEGAGEESSGVD. At serine 22 the chain carries Phosphoserine. The 127-residue stretch at 61–187 folds into the PX domain; that stretch reads SVSEAEKRTG…YLFLTQEGNW (127 aa). The a 1,2-diacyl-sn-glycero-3-phospho-(1D-myo-inositol-3-phosphate) site is built by arginine 106, serine 108, lysine 132, and arginine 154.

It belongs to the sorting nexin family. Heterodimer; heterodimerizes with SNX7 or SNX30. Interacts with WWC1/KIBRA. Identified in a complex with WWC1/KIBRA and dynein components DYNLL1 and DYNC1I2. Interacts with BIN1.

It is found in the early endosome. The protein localises to the early endosome membrane. In terms of biological role, involved in the regulation of endocytosis and in several stages of intracellular trafficking. Plays a role in recycling endocytosed transferrin receptor and prevent its degradation. Involved in autophagosome assembly by regulating trafficking and recycling of phospholipid scramblase ATG9A. The protein is Sorting nexin-4 of Pongo abelii (Sumatran orangutan).